A 236-amino-acid chain; its full sequence is 7-cyano-7-deazaguanine synthase (236 aa).

Position 7-17 (7-17 (CSGGLDSVSLA)) interacts with ATP. Positions 185, 193, 196, and 199 each coordinate Zn(2+).

The protein belongs to the QueC family. Zn(2+) is required as a cofactor.

It carries out the reaction 7-carboxy-7-deazaguanine + NH4(+) + ATP = 7-cyano-7-deazaguanine + ADP + phosphate + H2O + H(+). Its pathway is purine metabolism; 7-cyano-7-deazaguanine biosynthesis. Functionally, catalyzes the ATP-dependent conversion of 7-carboxy-7-deazaguanine (CDG) to 7-cyano-7-deazaguanine (preQ(0)). This Rhizobium etli (strain ATCC 51251 / DSM 11541 / JCM 21823 / NBRC 15573 / CFN 42) protein is 7-cyano-7-deazaguanine synthase.